The primary structure comprises 697 residues: Elongation factor G (697 aa).

The region spanning 8-282 is the tr-type G domain; that stretch reads EDYRNIGIMA…AVVDYLPSPL (275 aa). GTP is bound by residues 17 to 24, 81 to 85, and 135 to 138; these read AHIDAGKT, DTPGH, and NKMD.

Belongs to the TRAFAC class translation factor GTPase superfamily. Classic translation factor GTPase family. EF-G/EF-2 subfamily.

It localises to the cytoplasm. Catalyzes the GTP-dependent ribosomal translocation step during translation elongation. During this step, the ribosome changes from the pre-translocational (PRE) to the post-translocational (POST) state as the newly formed A-site-bound peptidyl-tRNA and P-site-bound deacylated tRNA move to the P and E sites, respectively. Catalyzes the coordinated movement of the two tRNA molecules, the mRNA and conformational changes in the ribosome. The protein is Elongation factor G of Mycoplasmopsis agalactiae (strain NCTC 10123 / CIP 59.7 / PG2) (Mycoplasma agalactiae).